A 365-amino-acid chain; its full sequence is Phosphopantothenate--cysteine ligase CAB2 (365 aa).

A disordered region spans residues 228 to 250; the sequence is QSGDNGKMGANNDTEGTTRTTPD. Over residues 238–248 the composition is skewed to polar residues; it reads NNDTEGTTRTT.

It belongs to the PPC synthetase family. Homodimer.

It localises to the cytoplasm. The protein resides in the nucleus. The catalysed reaction is (R)-4'-phosphopantothenate + L-cysteine + CTP = N-[(R)-4-phosphopantothenoyl]-L-cysteine + CMP + diphosphate + H(+). Its pathway is cofactor biosynthesis; coenzyme A biosynthesis; CoA from (R)-pantothenate: step 2/5. Its function is as follows. Catalyzes the first step in the biosynthesis of coenzyme A from vitamin B5, where cysteine is conjugated to 4'-phosphopantothenate to form 4-phosphopantothenoylcysteine. In Saccharomyces cerevisiae (strain ATCC 204508 / S288c) (Baker's yeast), this protein is Phosphopantothenate--cysteine ligase CAB2 (CAB2).